A 512-amino-acid polypeptide reads, in one-letter code: Opioid growth factor receptor-like protein 1 (512 aa).

Disordered regions lie at residues M1–T72, I323–K469, and S488–T512. 2 stretches are compositionally biased toward acidic residues: residues G28–E54 and T62–G71. Basic and acidic residues predominate over residues D328–A337. A compositionally biased stretch (basic residues) spans Q347–K361. A compositionally biased stretch (polar residues) spans T408–T421. The span at R449–C468 shows a compositional bias: basic and acidic residues. Polar residues predominate over residues S490–T499.

Belongs to the opioid growth factor receptor family.

The sequence is that of Opioid growth factor receptor-like protein 1 (ogfrl1) from Xenopus tropicalis (Western clawed frog).